A 291-amino-acid polypeptide reads, in one-letter code: Ribosomal RNA small subunit methyltransferase A (291 aa).

S-adenosyl-L-methionine is bound by residues His37, Leu39, Gly64, Glu85, Asp110, and Asn131.

It belongs to the class I-like SAM-binding methyltransferase superfamily. rRNA adenine N(6)-methyltransferase family. RsmA subfamily.

It is found in the cytoplasm. The enzyme catalyses adenosine(1518)/adenosine(1519) in 16S rRNA + 4 S-adenosyl-L-methionine = N(6)-dimethyladenosine(1518)/N(6)-dimethyladenosine(1519) in 16S rRNA + 4 S-adenosyl-L-homocysteine + 4 H(+). In terms of biological role, specifically dimethylates two adjacent adenosines (A1518 and A1519) in the loop of a conserved hairpin near the 3'-end of 16S rRNA in the 30S particle. May play a critical role in biogenesis of 30S subunits. The polypeptide is Ribosomal RNA small subunit methyltransferase A (Dehalococcoides mccartyi (strain CBDB1)).